Consider the following 306-residue polypeptide: uncharacterized protein (306 aa).

The next 8 membrane-spanning stretches (helical) occupy residues 7–27, 30–50, 68–88, 95–115, 144–164, 194–214, 232–252, and 274–294; these read LESW…GYLA, VGII…FMAL, LFIT…LFAL, ADHV…TLFI, AIGV…LMSF, IGAI…VLSV, IAIM…GLIF, and TIPF…NVAP.

The protein resides in the cell membrane. This is an uncharacterized protein from Mycoplasma genitalium (strain ATCC 33530 / DSM 19775 / NCTC 10195 / G37) (Mycoplasmoides genitalium).